The chain runs to 401 residues: Homeobox protein engrailed-1 (401 aa).

Disordered stretches follow at residues methionine 1 to glutamine 102, glycine 138 to glycine 167, serine 229 to proline 253, and arginine 293 to proline 315. Residues aspartate 13 to valine 48 show a composition bias toward low complexity. Pro residues-rich tracts occupy residues serine 49–proline 64 and proline 73–glutamine 88. Positions histidine 89–glutamine 102 are enriched in low complexity. Composition is skewed to gly residues over residues glycine 138–serine 147 and serine 234–glycine 243. The segment at residues aspartate 312–threonine 371 is a DNA-binding region (homeobox).

Belongs to the engrailed homeobox family.

Its subcellular location is the nucleus. Functionally, required for proper formation of the apical ectodermal ridge and correct dorsal-ventral patterning in the limb. This chain is Homeobox protein engrailed-1 (En1), found in Mus musculus (Mouse).